The sequence spans 237 residues: ADTIVAVELDTYPNTDIGDPNYPHIGIDIKSIRSKKIAKWNMQDGKVATAHIIYNSVGKRLSAVVSYPNADSATVSYDVDLDNVLPEWVRVGLSATTGLYKETNTILSWSFTSKLKSNSTAETNALHFTFNQFTKDQKDLILQGDATTDSDGNLQLTRVSSDGTPQGNSVGRALFYAPVHIWESSAVVASFDATFTFLIKSPDSDPADGITFFISNMDSTIPSGSGGRLLGLFPDAN.

Mn(2+)-binding residues include E8 and D10. Ca(2+)-binding residues include D10, Y12, N14, and D19. A carbohydrate is bound at residue N14. The Mn(2+) site is built by D19 and H24. A carbohydrate-binding residues include L99, Y100, D208, and R228.

This sequence belongs to the leguminous lectin family. In terms of assembly, homotetramer; dimer of dimers. Post-translationally, concanavalin A-like lectins of the Diocleinae subtribe undergo proteolytic processing referred to as circular permutation. The propeptide is split into an N-terminal and a C-terminal part, the gamma and beta chain, respectively. These are then religated in beta-gamma order to form the mature alpha chain. The beta and gamma chains can often be detected in cell extracts. Residues 1-118 of the mature chain, as displayed here, probably constitute the beta chain in the propeptide, residues 119-237 the gamma chain.

In terms of biological role, lectin. Induces paw edema in mice. Has a weak vasorelaxant effect on rat aorta. Has anti-inflammatory and anti-nociceptive effects. The chain is Lectin ConGF from Canavalia grandiflora (Jackbean).